The following is a 204-amino-acid chain: Copper-binding protein CutI (204 aa).

A signal peptide spans 1 to 26; that stretch reads MLKKIALTLCPAIVGSLLFFTAPASA. The Cu(2+) site is built by histidine 27 and glutamate 50. Over 27 to 178 the chain is Extracellular; that stretch reads HVSVKPAESA…DDSENSGSSA (152 aa). Positions 146-176 are disordered; sequence PHSITNITSAKQVTDEHGATKTEDDSENSGS. Residues 147-157 show a composition bias toward polar residues; sequence HSITNITSAKQ. The span at 158–168 shows a compositional bias: basic and acidic residues; it reads VTDEHGATKTE. Residues 179-199 form a helical membrane-spanning segment; sequence LDITAMVLSAAAIILSVAALV. At 200 to 204 the chain is on the cytoplasmic side; sequence KKKRA.

It localises to the cell membrane. In terms of biological role, copper-binding protein that probably plays a role in copper homeostasis. May act as metallochaperone, possibly to facilitate copper uptake via the CutJ/YcnJ importer. Preferentially binds Cu in its oxidized Cu(II) state in a 1:1 stoichiometry. The protein is Copper-binding protein CutI of Bacillus subtilis (strain 168).